A 622-amino-acid chain; its full sequence is Apical membrane antigen 1 (622 aa).

A signal peptide spans 1 to 24; that stretch reads MRKLYCVLLLSAFEFTYMINFGRG. The Extracellular portion of the chain corresponds to 25–546; the sequence is QNYWEHPYQK…EHKPTYDKMK (522 aa). 5 cysteine pairs are disulfide-bonded: cysteine 149–cysteine 302, cysteine 217–cysteine 247, cysteine 263–cysteine 275, cysteine 320–cysteine 418, and cysteine 337–cysteine 409. Residue asparagine 162 is glycosylated (N-linked (GlcNAc...) asparagine). Asparagine 286, asparagine 371, asparagine 421, asparagine 422, and asparagine 499 each carry an N-linked (GlcNAc...) asparagine glycan. Intrachain disulfides connect cysteine 443-cysteine 502, cysteine 490-cysteine 507, and cysteine 492-cysteine 509. The helical transmembrane segment at 547 to 567 threads the bilayer; that stretch reads IIIASSAAVAVLATILMVYLY. The Cytoplasmic segment spans residues 568-622; the sequence is KRKGNAEKYDKMDEPQHYGKSNSRNDEMLDPEASFWGEEKRASHTTPVLMEKPYY. Positions 578 to 594 are enriched in basic and acidic residues; that stretch reads KMDEPQHYGKSNSRNDE. The tract at residues 578–607 is disordered; that stretch reads KMDEPQHYGKSNSRNDEMLDPEASFWGEEK.

The protein belongs to the apicomplexan parasites AMA1 family.

It is found in the membrane. Its function is as follows. Involved in parasite invasion of erythrocytes. The polypeptide is Apical membrane antigen 1 (AMA-1) (Plasmodium falciparum (isolate FC27 / Papua New Guinea)).